Here is a 554-residue protein sequence, read N- to C-terminus: Tetratricopeptide repeat protein 34 (554 aa).

TPR repeat units follow at residues 38 to 71 (ETSC…RPQA), 166 to 199 (SESL…EPGN), 200 to 233 (VKAL…DPGT), 294 to 327 (PSWR…TPSS), 328 to 361 (EAAQ…DTQD), 411 to 445 (NPYH…PAED), 452 to 485 (SEDF…APAQ), and 500 to 533 (ASVF…DPSH).

This is Tetratricopeptide repeat protein 34 (Ttc34) from Mus musculus (Mouse).